The chain runs to 173 residues: Inorganic pyrophosphatase (173 aa).

Substrate contacts are provided by Lys26, Arg40, and Tyr52. Positions 62, 67, and 99 each coordinate Mg(2+). Tyr138 contacts substrate.

It belongs to the PPase family. Homohexamer. It depends on Mg(2+) as a cofactor.

It localises to the cytoplasm. The catalysed reaction is diphosphate + H2O = 2 phosphate + H(+). Its function is as follows. Catalyzes the hydrolysis of inorganic pyrophosphate (PPi) forming two phosphate ions. The chain is Inorganic pyrophosphatase from Sulfolobus acidocaldarius (strain ATCC 33909 / DSM 639 / JCM 8929 / NBRC 15157 / NCIMB 11770).